Here is a 118-residue protein sequence, read N- to C-terminus: Large ribosomal subunit protein bL20 (118 aa).

Belongs to the bacterial ribosomal protein bL20 family.

Its function is as follows. Binds directly to 23S ribosomal RNA and is necessary for the in vitro assembly process of the 50S ribosomal subunit. It is not involved in the protein synthesizing functions of that subunit. This Stutzerimonas stutzeri (strain A1501) (Pseudomonas stutzeri) protein is Large ribosomal subunit protein bL20.